The primary structure comprises 251 residues: Large ribosomal subunit protein uL3 (251 aa).

An N5-methylglutamine modification is found at glutamine 151. Residues 219-251 (PGAFRRNGEEAAAAPAAEAPAETPAEEAGQEGA) are disordered. A compositionally biased stretch (low complexity) spans 228-241 (EAAAAPAAEAPAET). Residues 242-251 (PAEEAGQEGA) show a composition bias toward acidic residues.

The protein belongs to the universal ribosomal protein uL3 family. Part of the 50S ribosomal subunit. Forms a cluster with proteins L14 and L19. In terms of processing, methylated by PrmB.

Functionally, one of the primary rRNA binding proteins, it binds directly near the 3'-end of the 23S rRNA, where it nucleates assembly of the 50S subunit. The polypeptide is Large ribosomal subunit protein uL3 (Parvibaculum lavamentivorans (strain DS-1 / DSM 13023 / NCIMB 13966)).